The chain runs to 68 residues: Tau-scoloptoxin(04)-Ssm1b (68 aa).

The first 25 residues, 1-25, serve as a signal peptide directing secretion; it reads MLKSFCILSVFMVLFLAKFPDLCSG. Residues 26 to 36 constitute a propeptide that is removed on maturation; the sequence is EEISPLKIVVR. 2 disulfides stabilise this stretch: cysteine 45/cysteine 56 and cysteine 50/cysteine 63. The tract at residues 55 to 67 is highly charged C-terminal region, binds to TRPV1 channel; sequence RCSIVDKQCIKKE.

This sequence belongs to the scoloptoxin-04 family. As to expression, expressed by the venom gland.

It is found in the secreted. Its function is as follows. Extremely potent agonist and potentiator of TRPV1 (EC(50)=470-521.5 nM (mouse)). It strongly promotes the heat activation process by downshifting the activation threshold temperature. It preferably binds to the activated channel and promotes its opening. Holding the channel closed by cooling prevents binding of this toxin, leaving it ineffective. The toxin binds to the charge-rich outer pore region of the channel where it directly interacts with the pore helix and turret, two adjacent structural elements known to be critical for activation gating of TRPV1. In comparison with Sm1b, induces a TRPV1 desensitization with slower kinetics (20 seconds). In vivo, induces pain in mice after intraplantar injection. Functionally, potent agonist and probable potentiator of TRPV1 (EC(50)=38.35 uM (mouse)). Also binds to the outer pore region of TRPV1. In comparison with Sm1a, induces a TRPV1 desensitization with faster kinetics (2 seconds) and leads to a more complete TRPV1 desensitization. Desensitization is achieved by reducing both the open probability and the single-channel conductance upon prolonged exposure. This Scolopendra mutilans (Chinese red-headed centipede) protein is Tau-scoloptoxin(04)-Ssm1b.